The following is a 229-amino-acid chain: Protein-L-isoaspartate O-methyltransferase (229 aa).

S74 is a catalytic residue.

This sequence belongs to the methyltransferase superfamily. L-isoaspartyl/D-aspartyl protein methyltransferase family.

It is found in the cytoplasm. It catalyses the reaction [protein]-L-isoaspartate + S-adenosyl-L-methionine = [protein]-L-isoaspartate alpha-methyl ester + S-adenosyl-L-homocysteine. Functionally, catalyzes the methyl esterification of L-isoaspartyl residues in peptides and proteins that result from spontaneous decomposition of normal L-aspartyl and L-asparaginyl residues. It plays a role in the repair and/or degradation of damaged proteins. This is Protein-L-isoaspartate O-methyltransferase from Pelotomaculum thermopropionicum (strain DSM 13744 / JCM 10971 / SI).